A 146-amino-acid polypeptide reads, in one-letter code: Large ribosomal subunit protein uL13 (146 aa).

This sequence belongs to the universal ribosomal protein uL13 family. Part of the 50S ribosomal subunit.

This protein is one of the early assembly proteins of the 50S ribosomal subunit, although it is not seen to bind rRNA by itself. It is important during the early stages of 50S assembly. The chain is Large ribosomal subunit protein uL13 from Bdellovibrio bacteriovorus (strain ATCC 15356 / DSM 50701 / NCIMB 9529 / HD100).